The sequence spans 166 residues: Probable chemoreceptor glutamine deamidase CheD (166 aa).

This sequence belongs to the CheD family.

The enzyme catalyses L-glutaminyl-[protein] + H2O = L-glutamyl-[protein] + NH4(+). Functionally, probably deamidates glutamine residues to glutamate on methyl-accepting chemotaxis receptors (MCPs), playing an important role in chemotaxis. This is Probable chemoreceptor glutamine deamidase CheD from Clostridium acetobutylicum (strain ATCC 824 / DSM 792 / JCM 1419 / IAM 19013 / LMG 5710 / NBRC 13948 / NRRL B-527 / VKM B-1787 / 2291 / W).